We begin with the raw amino-acid sequence, 203 residues long: Small ribosomal subunit protein uS4 (203 aa).

The region spanning 93–153 (QRLDSVVYRL…EKSKNILPIQ (61 aa)) is the S4 RNA-binding domain.

Belongs to the universal ribosomal protein uS4 family. In terms of assembly, part of the 30S ribosomal subunit. Contacts protein S5. The interaction surface between S4 and S5 is involved in control of translational fidelity.

Functionally, one of the primary rRNA binding proteins, it binds directly to 16S rRNA where it nucleates assembly of the body of the 30S subunit. Its function is as follows. With S5 and S12 plays an important role in translational accuracy. The protein is Small ribosomal subunit protein uS4 of Leuconostoc mesenteroides subsp. mesenteroides (strain ATCC 8293 / DSM 20343 / BCRC 11652 / CCM 1803 / JCM 6124 / NCDO 523 / NBRC 100496 / NCIMB 8023 / NCTC 12954 / NRRL B-1118 / 37Y).